The chain runs to 201 residues: Cytochrome c4 (201 aa).

An N-terminal signal peptide occupies residues 1-20; it reads MNKLLVSLLLTLGLTGLAHA. The heme c site is built by Cys34, Cys37, His38, Met77, Cys130, Cys133, His134, and Met178.

Post-translationally, binds 2 heme c groups covalently per subunit.

The protein resides in the periplasm. Functionally, diheme, high potential cytochrome c believed to be an intermediate electron donor to terminal oxidation systems. This Pseudomonas aeruginosa (strain ATCC 15692 / DSM 22644 / CIP 104116 / JCM 14847 / LMG 12228 / 1C / PRS 101 / PAO1) protein is Cytochrome c4 (cc4).